The primary structure comprises 412 residues: 46 kDa FK506-binding nuclear protein (412 aa).

Composition is skewed to acidic residues over residues 95–113, 169–178, and 188–216; these read EEDLEDEEEAEEEEEEEEA, GEDIDTDEND, and EGDDSDEEDDDEDEEDEEDDDEDDEEEEE. The interval 95–304 is disordered; it reads EEDLEDEEEA…PVEKKEKKQI (210 aa). Positions 247–257 are enriched in basic residues; that stretch reads KSQKRRLKKKL. Residues 271 to 303 are compositionally biased toward basic and acidic residues; sequence DKPKKEEPQQKAEKKKPEAKKEEAPVEKKEKKQ. The PPIase FKBP-type domain maps to 324-412; sequence GKVVMVYYEG…VFEVDLKNVK (89 aa).

This sequence belongs to the FKBP-type PPIase family. In terms of processing, phosphorylated by a nuclear kinase in the presence of Mg(2+) and ATP.

The protein resides in the nucleus. It catalyses the reaction [protein]-peptidylproline (omega=180) = [protein]-peptidylproline (omega=0). Inhibited by both FK506 and rapamycin. Functionally, PPIases accelerate the folding of proteins. It catalyzes the cis-trans isomerization of proline imidic peptide bonds in oligopeptides. Binds double-stranded DNA in vitro. The protein is 46 kDa FK506-binding nuclear protein (FKBP46) of Spodoptera frugiperda (Fall armyworm).